The following is an 845-amino-acid chain: Protein kintoun (845 aa).

A compositionally biased stretch (basic and acidic residues) spans 362 to 382 (SKEQAQMHETLRHFSREDSGV). 3 disordered regions span residues 362-420 (SKEQ…PVRH), 575-691 (QALK…SMSD), and 773-845 (AQHR…EMDD). At serine 380 the chain carries Phosphoserine. Acidic residues predominate over residues 391–400 (PVEEDPDGEL). Over residues 584 to 593 (GTKEEEKENQ) the composition is skewed to basic and acidic residues. The segment covering 611–622 (KPGKKQRKRNKK) has biased composition (basic residues). A compositionally biased stretch (polar residues) spans 640-671 (LTKNSELQPKSTFNLPQRKQRSYSECNDSTGG). Serine 779 carries the post-translational modification Phosphoserine. A compositionally biased stretch (polar residues) spans 794–804 (LKQQENQSRNC).

This sequence belongs to the PIH1 family. Kintoun subfamily. In terms of assembly, interacts with Pp1alpha-96A, Pp1-87B, Pp1-13C and flw.

Its subcellular location is the cytoplasm. Required for cytoplasmic pre-assembly of axonemal dyneins, thereby playing a central role in motility in cilia and flagella. Involved in pre-assembly of dynein arm complexes in the cytoplasm before intraflagellar transport loads them for the ciliary compartment. In Drosophila erecta (Fruit fly), this protein is Protein kintoun.